The chain runs to 123 residues: Small ribosomal subunit protein uS12 (123 aa).

Positions 1–32 (MPTINQLVRHGRKRSVKKTNTPALKASPQKRG) are disordered. The residue at position 89 (Asp-89) is a 3-methylthioaspartic acid.

This sequence belongs to the universal ribosomal protein uS12 family. In terms of assembly, part of the 30S ribosomal subunit. Contacts proteins S8 and S17. May interact with IF1 in the 30S initiation complex.

In terms of biological role, with S4 and S5 plays an important role in translational accuracy. Interacts with and stabilizes bases of the 16S rRNA that are involved in tRNA selection in the A site and with the mRNA backbone. Located at the interface of the 30S and 50S subunits, it traverses the body of the 30S subunit contacting proteins on the other side and probably holding the rRNA structure together. The combined cluster of proteins S8, S12 and S17 appears to hold together the shoulder and platform of the 30S subunit. The protein is Small ribosomal subunit protein uS12 of Desulfatibacillum aliphaticivorans.